Reading from the N-terminus, the 250-residue chain is Small ribosomal subunit protein uS2 (250 aa).

Belongs to the universal ribosomal protein uS2 family.

This is Small ribosomal subunit protein uS2 from Acidovorax sp. (strain JS42).